We begin with the raw amino-acid sequence, 663 residues long: MSELSDEASEPELLNRSLSMWHGLGAQVSREELDVPLDLHTAASIGQYEVVKECVQRRELDLNKKNGGGWTPLMYASYIGHDTIVHLLLEAGVSVNVPTPEGQTPLMLASSCGNESIAYFLLQQGAELEMKDIQGWTALFHCTSAGHQQMVKFLLESGANANVREPVYGFTPLMEAAAAGHEIIVQYFLNHGVKVDTRDHSGATARMLAKQYGHMKIVALMETHSPVLPKSLYRSSENYEDLSSSDESWPVPQRQRPCRKKGLSIHEGPRALARITATGLGGKTPDSYEQVPPRGYVTFTSSDENTMEGEGLCYRDVTSPINERDVESSSSSSREEPTFCASLGPVWRSSSSDGLARAQGLSSEASIESNEDSDHARKSSVRKQTRTYLKNKSRHNNSDGHWPSSTGTARTPGSEPQAEKSPYSGPQDLATLLEQIGCLKYLQVFEEQDVDLRIFLTLTESDLKEIGITLFGPKRKMTSAIARWHSSARPPSDALELAYADRLEAEMQELAIQLHKCCEEAEALRGQVSQEQELRAVVESCLLEQDSARKDIHAQLQEAQTLAQDAALVLDQLRACQAELSARLKQHHSPSEATQNPPFLPADSKGWPIPLQALSLPELSGALEDRVHEMGIMLRNAEPGETTDAEWEEMEGTIARRDDSDVG.

The interval 1-421 (MSELSDEASE…PGSEPQAEKS (421 aa)) is interaction with NEK7. A phosphoserine mark is found at S2 and S5. ANK repeat units follow at residues 34-64 (DVPL…DLNK), 68-97 (GGWT…SVNV), 101-130 (EGQT…ELEM), 134-163 (QGWT…NANV), 168-197 (YGFT…KVDT), and 201-220 (SGAT…IVAL). N96 bears the 3-hydroxyasparagine mark. Residues S201, S225, S243, S244, and S245 each carry the phosphoserine modification. Disordered regions lie at residues 242-261 (LSSS…CRKK) and 278-425 (TGLG…PYSG). T318 is modified (phosphothreonine). S319 is subject to Phosphoserine. Positions 322–337 (NERDVESSSSSSREEP) are enriched in basic and acidic residues. Phosphoserine occurs at positions 366, 369, and 373. A compositionally biased stretch (basic residues) spans 378–395 (KSSVRKQTRTYLKNKSRH). The SAM domain maps to 424–487 (SGPQDLATLL…TSAIARWHSS (64 aa)). Residues 500–575 (ADRLEAEMQE…AALVLDQLRA (76 aa)) adopt a coiled-coil conformation. Residue S540 is modified to Phosphoserine. Disordered stretches follow at residues 585-604 (KQHH…PADS) and 637-663 (AEPG…SDVG). The segment covering 641–651 (ETTDAEWEEME) has biased composition (acidic residues). Residues 654–663 (IARRDDSDVG) are compositionally biased toward basic and acidic residues.

As to quaternary structure, homooligomer. Interacts (via SAM domain) with ANKS6 (via SAM domain). Interacts with BICC1. Interacts with NPHP1. Interacts with NEK8. Interacts with HIF1AN. Interacts with NEK7; this interaction alters the subcellular distribution of NEK7 by preventing its nuclear translocation. Hydroxylated at Asn-96, most probably by HIF1AN. Post-translationally, phosphorylations at Ser-5, Ser-225, Thr-318, Ser-319, Ser-366 and Ser-369 occur in a NEK7-dependent manner. In terms of processing, polyubiquitinated.

The protein resides in the cell projection. Its subcellular location is the cilium. It is found in the cytoplasm. In terms of biological role, may be involved in vasopressin signaling in the kidney. The polypeptide is Ankyrin repeat and SAM domain-containing protein 3 (Anks3) (Rattus norvegicus (Rat)).